We begin with the raw amino-acid sequence, 88 residues long: Sec-independent protein translocase protein TatA (88 aa).

The chain crosses the membrane as a helical span at residues 3–23 (IFGVGLPEVTVILILALLIFG). A disordered region spans residues 56 to 88 (MNEQDKDESPISIESNQTNEINQEKIDSENSKK). The segment covering 67-76 (SIESNQTNEI) has biased composition (polar residues). Residues 77-88 (NQEKIDSENSKK) are compositionally biased toward basic and acidic residues.

The protein belongs to the TatA/E family. As to quaternary structure, forms a complex with TatC.

It localises to the cell inner membrane. Part of the twin-arginine translocation (Tat) system that transports large folded proteins containing a characteristic twin-arginine motif in their signal peptide across membranes. TatA could form the protein-conducting channel of the Tat system. This chain is Sec-independent protein translocase protein TatA, found in Prochlorococcus marinus (strain AS9601).